Here is an 838-residue protein sequence, read N- to C-terminus: P protein (838 aa).

Residues 1 to 179 (MHLEGRDGRR…KLRRCVQWLK (179 aa)) are Cytoplasmic-facing. Disordered stretches follow at residues 38–60 (LPRG…GQSS) and 74–94 (KGRS…DSCF). The span at 78 to 87 (HSSLPQMSSS) shows a compositional bias: polar residues. The chain crosses the membrane as a helical span at residues 180 to 197 (VMGLFAFVVLCSILFSLY). The Extracellular portion of the chain corresponds to 198–330 (PDQGKLWQLL…QYLRGSVETQ (133 aa)). Residues Asn-214, Asn-218, and Asn-273 are each glycosylated (N-linked (GlcNAc...) asparagine). Residues 331-347 (VTIATAILAGVYALIIF) form a helical membrane-spanning segment. Residues 348–353 (EIVHRT) are Cytoplasmic-facing. The helical transmembrane segment at 354–370 (LAAMLGSLAALAALAVI) threads the bilayer. The Extracellular portion of the chain corresponds to 371–384 (GDRPSLTHVVEWID). A helical membrane pass occupies residues 385–401 (FETLALLFGMMILVAIF). The Cytoplasmic portion of the chain corresponds to 402–423 (SETGFFDYCAVKAYRLSRGRVW). A helical transmembrane segment spans residues 424–440 (AMIIMLCLIAAVLSAFL). The Extracellular portion of the chain corresponds to 441-513 (DNVTTMLLFT…DFAGFTAHMF (73 aa)). A glycan (N-linked (GlcNAc...) asparagine) is linked at Asn-442. Residues 514–530 (IGICLVLLVCFPLLRLL) form a helical membrane-spanning segment. Residues 531-620 (YWNRKLYNKE…LQKKHRISDG (90 aa)) are Cytoplasmic-facing. The helical transmembrane segment at 621–637 (ILLAKCLTVLGFVIFMF) threads the bilayer. Topologically, residues 638–647 (FLNSFVPGIH) are extracellular. A helical membrane pass occupies residues 648-664 (LDLGWIAILGAIWLLIL). The Cytoplasmic portion of the chain corresponds to 665-679 (ADIHDFEIILHRVEW). Residues 680 to 696 (ATLLFFAALFVLMEALA) form a helical membrane-spanning segment. Residues 697–720 (HLHLIEYVGEQTALLIKMVPEEQR) lie on the Extracellular side of the membrane. The chain crosses the membrane as a helical span at residues 721 to 737 (LIAAIVLVVWVSALASS). The Cytoplasmic portion of the chain corresponds to 738 to 760 (LIDNIPFTATMIPVLLNLSHDPE). A helical transmembrane segment spans residues 761–777 (VGLPAPPLMYALAFGAC). At 778–817 (LGGNGTLIGASANVVCAGIAEQHGYGFSFMEFFRLGFPMM) the chain is on the extracellular side. An N-linked (GlcNAc...) asparagine glycan is attached at Asn-781. Residues 818–834 (VVSCTVGMCYLLVAHVV) form a helical membrane-spanning segment. Over 835-838 (VGWN) the chain is Cytoplasmic.

Belongs to the CitM (TC 2.A.11) transporter family. Expressed in melanocytes and retinal pigment epithelium.

The protein localises to the melanosome membrane. The enzyme catalyses chloride(in) = chloride(out). In terms of biological role, contributes to a melanosome-specific anion (chloride) current that modulates melanosomal pH for optimal tyrosinase activity required for melanogenesis and the melanosome maturation. One of the components of the mammalian pigmentary system. May serve as a key control point at which ethnic skin color variation is determined. Major determinant of brown and/or blue eye color. Seems to regulate the post-translational processing of tyrosinase, which catalyzes the limiting reaction in melanin synthesis. The chain is P protein from Homo sapiens (Human).